A 232-amino-acid chain; its full sequence is Vesicle transport through interaction with t-SNAREs homolog 1B (232 aa).

An N-acetylalanine modification is found at Ala-2. Interaction with CLINT1 stretches follow at residues 2–23 and 69–73; these read ASSA…GLHE and APLSF. At 2–208 the chain is on the cytoplasmic side; sequence ASSAASSEHF…SRKVTTNKLL (207 aa). A coiled-coil region spans residues 35–98; sequence TAGTEEKKKL…AKLHREVRST (64 aa). Thr-103 bears the Phosphothreonine mark. Omega-N-methylarginine is present on Arg-107. A Phosphoserine modification is found at Ser-138. A coiled-coil region spans residues 161-198; that stretch reads SEIIEELGEQRDQLERTKSRLVNTSENLSKSRKILRSM. A helical; Anchor for type IV membrane protein membrane pass occupies residues 209 to 229; sequence LSIIILLELAILGGLVYYKFF. The Vesicular portion of the chain corresponds to 230 to 232; sequence RSH.

It belongs to the VTI1 family. Forms a SNARE complex with STX7, STX8 and VAMP8 which functions in the homotypic fusion of late endosomes. Component of the SNARE complex composed of STX7, STX8, VAMP7 and VIT1B that is required for heterotypic fusion of late endosomes with lysosomes. May interact with STX17. Interacts with CLINT1. As to expression, expressed in all tissues examined.

Its subcellular location is the early endosome membrane. The protein resides in the late endosome membrane. It is found in the lysosome membrane. The protein localises to the cytoplasmic granule. It localises to the recycling endosome membrane. V-SNARE that mediates vesicle transport pathways through interactions with t-SNAREs on the target membrane. These interactions are proposed to mediate aspects of the specificity of vesicle trafficking and to promote fusion of the lipid bilayers. May be concerned with increased secretion of cytokines associated with cellular senescence. The polypeptide is Vesicle transport through interaction with t-SNAREs homolog 1B (VTI1B) (Homo sapiens (Human)).